A 368-amino-acid polypeptide reads, in one-letter code: Ankyrin repeat domain-containing protein 40 (368 aa).

The residue at position 1 (M1) is an N-acetylmethionine. 2 ANK repeats span residues 9–38 and 43–72; these read EQQERLREAAALGDIREVQKLVESGVDVNS and NGWTCLHWACKRNHGQVVSYLLKSGADKEI. 3 disordered regions span residues 93–115, 139–176, and 196–238; these read MGVEEEDDDDDDDDNLPQLKKES, DSAQMQNGGPSTPPASPPADGSPPLLPPGEPPLLGTFP, and ILRT…NGTY. Acidic residues predominate over residues 95–107; the sequence is VEEEDDDDDDDDN. Pro residues predominate over residues 149–169; sequence STPPASPPADGSPPLLPPGEP. Residues 212-224 are compositionally biased toward polar residues; the sequence is PVSQSRSLFSSVP.

The protein is Ankyrin repeat domain-containing protein 40 (ANKRD40) of Homo sapiens (Human).